The following is a 183-amino-acid chain: Ribosome-recycling factor (183 aa).

A disordered region spans residues 134 to 156 (DANDELKKHQSEMSQDEVKGHQD).

The protein belongs to the RRF family.

The protein resides in the cytoplasm. Its function is as follows. Responsible for the release of ribosomes from messenger RNA at the termination of protein biosynthesis. May increase the efficiency of translation by recycling ribosomes from one round of translation to another. This is Ribosome-recycling factor from Leptospira biflexa serovar Patoc (strain Patoc 1 / Ames).